The chain runs to 85 residues: Beta-mammal/insect toxin Lqhb1 (85 aa).

The first 19 residues, 1–19 (MKIIIFLIVSSLMLIGVKT), serve as a signal peptide directing secretion. The LCN-type CS-alpha/beta domain occupies 20 to 82 (DNGYLLNKAT…LWAYATNKCN (63 aa)). Intrachain disulfides connect Cys-31–Cys-81, Cys-35–Cys-56, Cys-42–Cys-63, and Cys-46–Cys-65.

This sequence belongs to the long (4 C-C) scorpion toxin superfamily. Sodium channel inhibitor family. In terms of tissue distribution, expressed by the venom gland.

The protein localises to the secreted. Beta toxins bind voltage-independently at site-4 of sodium channels (Nav) and shift the voltage of activation toward more negative potentials thereby affecting sodium channel activation and promoting spontaneous and repetitive firing. Competes, with apparent high affinity, with anti-insect and anti-mammalian beta-toxins for binding to cockroach and rat brain synaptosomes, respectively. Also competes with an anti-mammalian alpha-toxin on binding to rat brain sodium channels. Has a weak effect on cardiac sodium channels and a marked effect on rat brain and skeletal muscle sodium channels. The polypeptide is Beta-mammal/insect toxin Lqhb1 (Leiurus hebraeus (Hebrew deathstalker scorpion)).